The primary structure comprises 347 residues: Haptoglobin (347 aa).

Positions 1-18 (MRALGAVVTLLLWGQLFA) are cleaved as a signal peptide. The Sushi domain maps to 31-88 (DSCPKPPEIANGYVEHLVRYRCRQFYRLRAEGDGVYTLNDEKQWMNTVAGEKLPECEA). Intrachain disulfides connect cysteine 52-cysteine 86, cysteine 90-cysteine 207, cysteine 250-cysteine 281, and cysteine 292-cysteine 322. The Peptidase S1 domain occupies 103–345 (IIGGSMDAKG…LKDWVQETMA (243 aa)). 3 N-linked (GlcNAc...) asparagine glycosylation sites follow: asparagine 148, asparagine 182, and asparagine 264. The interval 259–264 (VPEKKN) is interaction with CD163.

This sequence belongs to the peptidase S1 family. In terms of assembly, tetramer of two alpha and two beta chains; disulfide-linked. The hemoglobin/haptoglobin complex is composed of a haptoglobin dimer bound to two hemoglobin alpha-beta dimers. Interacts with CD163. Interacts with ERGIC3. Expressed by the liver and secreted in plasma.

Its subcellular location is the secreted. Functionally, as a result of hemolysis, hemoglobin is found to accumulate in the kidney and is secreted in the urine. Haptoglobin captures, and combines with free plasma hemoglobin to allow hepatic recycling of heme iron and to prevent kidney damage. Haptoglobin also acts as an antioxidant, has antibacterial activity and plays a role in modulating many aspects of the acute phase response. Hemoglobin/haptoglobin complexes are rapidly cleared by the macrophage CD163 scavenger receptor expressed on the surface of liver Kupfer cells through an endocytic lysosomal degradation pathway. In Mus caroli (Ryukyu mouse), this protein is Haptoglobin (Hp).